The sequence spans 220 residues: MNEDNHESSSSGCDNQIEFLVSEAEQRRRRVNHLDTEVHGLGYDPFSYCGRRVHVLLLTKLISVLTIPFYVAIIIFISFFGNATSVMFSVIILGSVLISTCYGAFRGAKMCLIPFVIIQLVFLIYDLILITILLLAVVFPKMFLSALLRLPLEDIPFGTDQVLLGCSLLLALLLAPLVWTTHVVYIDFLFISQVDETLHMLKEANQKVSQDDVSPNRMMF.

The next 4 membrane-spanning stretches (helical) occupy residues 61–81 (LISV…SFFG), 85–105 (SVMF…YGAF), 115–135 (FVII…ILLL), and 150–170 (LPLE…SLLL).

It localises to the membrane. This is an uncharacterized protein from Caenorhabditis elegans.